We begin with the raw amino-acid sequence, 443 residues long: ATP-dependent protease ATPase subunit HslU (443 aa).

Residues isoleucine 18, 60-65 (GVGKTE), aspartate 256, glutamate 321, and arginine 393 contribute to the ATP site.

This sequence belongs to the ClpX chaperone family. HslU subfamily. In terms of assembly, a double ring-shaped homohexamer of HslV is capped on each side by a ring-shaped HslU homohexamer. The assembly of the HslU/HslV complex is dependent on binding of ATP.

It localises to the cytoplasm. In terms of biological role, ATPase subunit of a proteasome-like degradation complex; this subunit has chaperone activity. The binding of ATP and its subsequent hydrolysis by HslU are essential for unfolding of protein substrates subsequently hydrolyzed by HslV. HslU recognizes the N-terminal part of its protein substrates and unfolds these before they are guided to HslV for hydrolysis. This is ATP-dependent protease ATPase subunit HslU from Escherichia coli O139:H28 (strain E24377A / ETEC).